A 722-amino-acid polypeptide reads, in one-letter code: G2-specific protein kinase fin1 (722 aa).

Residues 4–281 (YKILECIGHG…TYQLLRSPIL (278 aa)) enclose the Protein kinase domain. Residues 10–18 (IGHGSFGRI) and Lys33 contribute to the ATP site. The active-site Proton acceptor is the Asp151. The disordered stretch occupies residues 528 to 557 (LSVESDETAVSASSGESVPTDSTLTDTKSK). The segment covering 535–546 (TAVSASSGESVP) has biased composition (polar residues).

It belongs to the protein kinase superfamily. Ser/Thr protein kinase family. NIMA subfamily.

It is found in the cytoplasm. The protein resides in the cytoskeleton. The protein localises to the microtubule organizing center. It localises to the spindle pole body. The catalysed reaction is L-seryl-[protein] + ATP = O-phospho-L-seryl-[protein] + ADP + H(+). The enzyme catalyses L-threonyl-[protein] + ATP = O-phospho-L-threonyl-[protein] + ADP + H(+). Functionally, promotes chromosome condensation and nuclear envelope dynamics during mitosis. Activity appears at metaphase-anaphase transition. The sequence is that of G2-specific protein kinase fin1 (fin1) from Schizosaccharomyces pombe (strain 972 / ATCC 24843) (Fission yeast).